Reading from the N-terminus, the 559-residue chain is Probable 2-ketoarginine decarboxylase AruI (559 aa).

Glu-76 lines the thiamine diphosphate pocket.

This sequence belongs to the TPP enzyme family. Requires thiamine diphosphate as cofactor.

The catalysed reaction is 5-guanidino-2-oxopentanoate + H(+) = 4-guanidinobutanal + CO2. Its pathway is amino-acid degradation; L-arginine degradation. Catalyzes the decarboxylation of 2-ketoarginine, leading to the formation of 4-guanidinobutyraldehyde. The polypeptide is Probable 2-ketoarginine decarboxylase AruI (aruI) (Pseudomonas aeruginosa (strain ATCC 15692 / DSM 22644 / CIP 104116 / JCM 14847 / LMG 12228 / 1C / PRS 101 / PAO1)).